Here is a 501-residue protein sequence, read N- to C-terminus: Type II secretion system protein E (501 aa).

262–269 contributes to the ATP binding site; it reads GPTGSGKS. Residues C395, C398, C428, and C431 each coordinate Zn(2+).

The protein belongs to the GSP E family. In terms of assembly, forms homooligomers; most probably hexamers. Interacts with ExeL/GspL. Zn(2+) serves as cofactor.

It localises to the cell inner membrane. It carries out the reaction ATP + H2O + cellular proteinSide 1 = ADP + phosphate + cellular proteinSide 2.. ATPase component of the type II secretion system required for the energy-dependent secretion of extracellular factors such as proteases and toxins from the periplasm. Acts as a molecular motor to provide the energy that is required for assembly of the pseudopilus and the extrusion of substrates generated in the cytoplasm. The sequence is that of Type II secretion system protein E (exeE) from Aeromonas hydrophila.